Here is a 201-residue protein sequence, read N- to C-terminus: Holliday junction branch migration complex subunit RuvA (201 aa).

The segment at 1–64 (MFNSISGILS…EDQMRLFGFP (64 aa)) is domain I. Residues 65–140 (NQAERSLFLD…KLTNLNEVSS (76 aa)) are domain II. Positions 140–144 (SKGQA) are flexible linker. Residues 145 to 201 (SVSCEYEDIVTALTEMGFERKSVIVQVEKIAEEMKAAGSDPLKNEEELFRRSIVALS) form a domain III region.

It belongs to the RuvA family. Homotetramer. Forms an RuvA(8)-RuvB(12)-Holliday junction (HJ) complex. HJ DNA is sandwiched between 2 RuvA tetramers; dsDNA enters through RuvA and exits via RuvB. An RuvB hexamer assembles on each DNA strand where it exits the tetramer. Each RuvB hexamer is contacted by two RuvA subunits (via domain III) on 2 adjacent RuvB subunits; this complex drives branch migration. In the full resolvosome a probable DNA-RuvA(4)-RuvB(12)-RuvC(2) complex forms which resolves the HJ.

It localises to the cytoplasm. Its function is as follows. The RuvA-RuvB-RuvC complex processes Holliday junction (HJ) DNA during genetic recombination and DNA repair, while the RuvA-RuvB complex plays an important role in the rescue of blocked DNA replication forks via replication fork reversal (RFR). RuvA specifically binds to HJ cruciform DNA, conferring on it an open structure. The RuvB hexamer acts as an ATP-dependent pump, pulling dsDNA into and through the RuvAB complex. HJ branch migration allows RuvC to scan DNA until it finds its consensus sequence, where it cleaves and resolves the cruciform DNA. In Treponema denticola (strain ATCC 35405 / DSM 14222 / CIP 103919 / JCM 8153 / KCTC 15104), this protein is Holliday junction branch migration complex subunit RuvA.